The chain runs to 253 residues: MIREGDKVVLVDPRGKRYLITVSKRDFHTDLGILKLEEIIGRNFGEAIKSHKGHEFKILRPRIVDYLDKMKRGPQIVHPKDAALIVAYAGISPGDFIVEAGVGSGALTLFLANIVGPEGRVVSYEIREDFAKLAWENIKWAGFDDRVTIKLKDIYEGIEEENVDHVILDLPQPERVVEHAAKALKPGGFFVAYTPCSNQVMRLHEKLREFKDYFMKPRTINVLVFDQEVKKECMRPRTTALVHTGYITFARRI.

S-adenosyl-L-methionine contacts are provided by residues 104 to 107, Glu125, Asp153, and Asp169; that span reads SGAL.

This sequence belongs to the class I-like SAM-binding methyltransferase superfamily. TRM61 family. As to quaternary structure, homotetramer composed of a dimer of dimers; disulfide-linked. Disulfide bonds are important for the stability of TrmI at extreme temperatures.

The enzyme catalyses adenosine(57)/adenosine(58) in tRNA + 2 S-adenosyl-L-methionine = N(1)-methyladenosine(57)/N(1)-methyladenosine(58) in tRNA + 2 S-adenosyl-L-homocysteine + 2 H(+). Catalyzes the S-adenosyl-L-methionine-dependent formation of N(1)-methyladenosine at position(s) 57 (m1A57) and 58 (m1A58) in the T-loop of some tRNAs. Methylates the first adenine of an AA sequence. This Pyrococcus abyssi (strain GE5 / Orsay) protein is tRNA (adenine(57)-N(1)/adenine(58)-N(1))-methyltransferase TrmI (trmI).